A 548-amino-acid chain; its full sequence is BTB/POZ domain-containing protein At5g17580 (548 aa).

One can recognise a BTB domain in the interval 7-74 (SDLHINVKGV…CNGSEFKFTS (68 aa)). The region spanning 180 to 442 (DWKSEDLITI…VNVLCVSQLQ (263 aa)) is the NPH3 domain. At Y383 the chain carries Phosphotyrosine. Residues 442 to 493 (QIRDTVAKEIKGMEEKVDEEEEEEIEVSSDEDEMEKMSNKLLGLEIENDECV) are a coiled coil.

This sequence belongs to the NPH3 family.

Its pathway is protein modification; protein ubiquitination. Its function is as follows. May act as a substrate-specific adapter of an E3 ubiquitin-protein ligase complex (CUL3-RBX1-BTB) which mediates the ubiquitination and subsequent proteasomal degradation of target proteins. The polypeptide is BTB/POZ domain-containing protein At5g17580 (Arabidopsis thaliana (Mouse-ear cress)).